We begin with the raw amino-acid sequence, 66 residues long: Large ribosomal subunit protein bL33c (66 aa).

The protein belongs to the bacterial ribosomal protein bL33 family.

The protein localises to the plastid. The protein resides in the chloroplast. This is Large ribosomal subunit protein bL33c from Cryptomeria japonica (Japanese cedar).